Here is a 373-residue protein sequence, read N- to C-terminus: T-protein (373 aa).

The 90-residue stretch at 1–90 (MVAELTALRD…ESYTSENDKG (90 aa)) folds into the Chorismate mutase domain. The Prephenate/arogenate dehydrogenase domain occupies 99–361 (RPVVIVGGKG…DHAKRFLVES (263 aa)).

The protein in the C-terminal section; belongs to the prephenate/arogenate dehydrogenase family.

Its subcellular location is the cytoplasm. The enzyme catalyses chorismate = prephenate. It carries out the reaction prephenate + NAD(+) = 3-(4-hydroxyphenyl)pyruvate + CO2 + NADH. It participates in amino-acid biosynthesis; L-tyrosine biosynthesis; (4-hydroxyphenyl)pyruvate from prephenate (NAD(+) route): step 1/1. The protein operates within metabolic intermediate biosynthesis; prephenate biosynthesis; prephenate from chorismate: step 1/1. The polypeptide is T-protein (tyrA) (Enterobacter agglomerans (Erwinia herbicola)).